Reading from the N-terminus, the 782-residue chain is Pyridoxal-dependent decarboxylase domain-containing protein 1 (782 aa).

Over residues 26–48 (ILEDNQRPSEEEKDGKKYTRKDI) the composition is skewed to basic and acidic residues. Disordered stretches follow at residues 26 to 56 (ILED…QGSG), 673 to 695 (QTTG…AGQK), 702 to 721 (RNSD…EVES), and 726 to 782 (PMPE…DSLR). 2 stretches are compositionally biased toward polar residues: residues 703–714 (NSDAMSETSSIS) and 747–782 (AEQS…DSLR).

It belongs to the group II decarboxylase family. Pyridoxal 5'-phosphate serves as cofactor.

The sequence is that of Pyridoxal-dependent decarboxylase domain-containing protein 1 (pdxdc1) from Xenopus laevis (African clawed frog).